Consider the following 101-residue polypeptide: Large ribosomal subunit protein uL24 (101 aa).

Belongs to the universal ribosomal protein uL24 family. As to quaternary structure, part of the 50S ribosomal subunit.

One of two assembly initiator proteins, it binds directly to the 5'-end of the 23S rRNA, where it nucleates assembly of the 50S subunit. Functionally, one of the proteins that surrounds the polypeptide exit tunnel on the outside of the subunit. This Streptococcus thermophilus (strain CNRZ 1066) protein is Large ribosomal subunit protein uL24.